The following is a 231-amino-acid chain: Small ribosomal subunit protein uS3 (231 aa).

Positions 17-86 (VEKYLTKELK…SPQIEVQQVQ (70 aa)) constitute a KH type-2 domain.

It belongs to the universal ribosomal protein uS3 family. Part of the 30S ribosomal subunit.

Functionally, binds the lower part of the 30S subunit head. This Methanoregula boonei (strain DSM 21154 / JCM 14090 / 6A8) protein is Small ribosomal subunit protein uS3.